Consider the following 53-residue polypeptide: TEQAAPAADDPEGMVKASCASCHGQNLEGGVGPALADVGSRNAMPAGMVDPAK.

The heme c site is built by Cys19, Cys22, His23, and Met44.

Post-translationally, binds 1 heme c group covalently per subunit.

It is found in the cell membrane. This chain is Cytochrome c-552, found in Schinkia azotoformans (Bacillus azotoformans).